Consider the following 327-residue polypeptide: Zinc transport protein ZntB (327 aa).

Over 1–273 (MEAIKGSEVN…SRRSYTMSLM (273 aa)) the chain is Cytoplasmic. The chain crosses the membrane as a helical span at residues 274–294 (AMVFLPSTFLTGLFGVNLGGI). The Periplasmic segment spans residues 295 to 300 (PGGGWH). A helical transmembrane segment spans residues 301-321 (LGFSVFCVALVLLIGGVTWWL). Over 322–327 (HRSKWL) the chain is Cytoplasmic.

This sequence belongs to the CorA metal ion transporter (MIT) (TC 1.A.35) family.

It localises to the cell inner membrane. The catalysed reaction is Zn(2+)(out) + H(+)(out) = Zn(2+)(in) + H(+)(in). Its function is as follows. Zinc transporter. Acts as a Zn(2+):proton symporter, which likely mediates zinc ion uptake. In Cronobacter sakazakii (strain ATCC BAA-894) (Enterobacter sakazakii), this protein is Zinc transport protein ZntB.